The primary structure comprises 878 residues: Bifunctional heparan sulfate N-deacetylase/N-sulfotransferase 1 (878 aa).

At 1-17 the chain is on the cytoplasmic side; that stretch reads MSLSLKTRRFGRPVRPQ. The tract at residues 1 to 169 is sufficient for localization to Golgi membrane; that stretch reads MSLSLKTRRF…VEYGVGIIGF (169 aa). The helical; Signal-anchor for type II membrane protein transmembrane segment at 18 to 38 threads the bilayer; the sequence is LVLLLLFALCLLSVFISAYYL. The Lumenal portion of the chain corresponds to 39-878; that stretch reads YGWKRGLEPS…WLREELQSTR (840 aa). The heparan sulfate N-deacetylase 1 stretch occupies residues 40 to 594; the sequence is GWKRGLEPSG…KRHKDIWSKE (555 aa). Residues 47–71 form a disordered region; sequence PSGSEAQSPDCDEPKISPSRLLPMK. N-linked (GlcNAc...) asparagine glycans are attached at residues Asn231, Asn347, and Asn397. Residues 595 to 878 form a heparan sulfate N-sulfotransferase 1 region; the sequence is KTCDRFPKLL…WLREELQSTR (284 aa). Residue Lys610 is the For sulfotransferase activity of the active site. 610-614 contacts adenosine 3',5'-bisphosphate; it reads KTGTT. Asn663 is a glycosylation site (N-linked (GlcNAc...) asparagine). The adenosine 3',5'-bisphosphate site is built by Ser708 and Trp813. A disulfide bridge connects residues Cys814 and Cys824. 829-833 serves as a coordination point for adenosine 3',5'-bisphosphate; sequence KGRKY.

It belongs to the sulfotransferase 1 family. NDST subfamily. As to quaternary structure, monomer.

It is found in the golgi apparatus membrane. Its subcellular location is the golgi apparatus. The protein resides in the trans-Golgi network membrane. It catalyses the reaction alpha-D-glucosaminyl-[heparan sulfate](n) + 3'-phosphoadenylyl sulfate = N-sulfo-alpha-D-glucosaminyl-[heparan sulfate](n) + adenosine 3',5'-bisphosphate + 2 H(+). The protein operates within glycan metabolism; heparan sulfate biosynthesis. It functions in the pathway glycan metabolism; heparin biosynthesis. Essential bifunctional enzyme that catalyzes both the N-deacetylation and the N-sulfation of glucosamine (GlcNAc) of the glycosaminoglycan in heparan sulfate. Modifies the GlcNAc-GlcA disaccharide repeating sugar backbone to make N-sulfated heparosan, a prerequisite substrate for later modifications in heparin biosynthesis. Plays a role in determining the extent and pattern of sulfation of heparan sulfate. This chain is Bifunctional heparan sulfate N-deacetylase/N-sulfotransferase 1 (ndst1), found in Xenopus tropicalis (Western clawed frog).